We begin with the raw amino-acid sequence, 165 residues long: Probable chemoreceptor glutamine deamidase CheD (165 aa).

Belongs to the CheD family.

The catalysed reaction is L-glutaminyl-[protein] + H2O = L-glutamyl-[protein] + NH4(+). Probably deamidates glutamine residues to glutamate on methyl-accepting chemotaxis receptors (MCPs), playing an important role in chemotaxis. The protein is Probable chemoreceptor glutamine deamidase CheD of Clostridium tetani (strain Massachusetts / E88).